Here is a 331-residue protein sequence, read N- to C-terminus: Nucleotide sugar transporter SLC35B4 (331 aa).

11 helical membrane-spanning segments follow: residues 4–24 (ALAVGLVFAGCCSNVIFLELL), 30–50 (GCGNIVTFAQFLFIAVEGFLF), 59–79 (PAIPIRYYAIMVTMFFTVSVV), 92–112 (LHMIFRSGSLIANMILGIIIL), 117–137 (SIFKYTSIALVSVGIFICTFM), 153–173 (GFQAFVWWLLGIGALTFALLM), 201–221 (ALPLPGFVFLASDIYDHAVLF), 229–249 (IPVIGVTLPIMWFYLLMNIIT), 251–267 (YVCIRGVFILTTECASL), 268–288 (TVTLVVTLRKFVSLIFSILYF), and 291–311 (PFTLWHWLGTLFVFIGTLMYT). The short motif at 326–331 (KDSKKN) is the Mediates endoplasmic reticulum retention element.

The protein belongs to the nucleotide-sugar transporter family. SLC35B subfamily.

Its subcellular location is the endoplasmic reticulum membrane. The catalysed reaction is UDP-N-acetyl-alpha-D-glucosamine(in) + UDP-alpha-D-glucuronate(out) = UDP-N-acetyl-alpha-D-glucosamine(out) + UDP-alpha-D-glucuronate(in). It carries out the reaction UDP-alpha-D-xylose(in) + UDP-alpha-D-glucuronate(out) = UDP-alpha-D-xylose(out) + UDP-alpha-D-glucuronate(in). Functionally, antiporter that transports nucleotide sugars across the endoplasmic reticulum (ER) membrane in exchange for another nucleotide sugar. May couple UDP-alpha-D-glucuronate (UDP-GlcA) or UDP-alpha-D-xylose (UDP-Xyl) efflux to UDP-alpha-D-glucuronate (UDP-GlcA) influx into the ER lumen, which in turn stimulates glucuronidation and excretion of endobiotics and xenobiotics. This is Nucleotide sugar transporter SLC35B4 (SLC35B4) from Pongo abelii (Sumatran orangutan).